A 77-amino-acid chain; its full sequence is NAD(P)H-quinone oxidoreductase subunit L (77 aa).

A run of 2 helical transmembrane segments spans residues 12-32 (FVAY…ILFY) and 47-67 (LGVY…SPFL).

It belongs to the complex I NdhL subunit family. In terms of assembly, NDH-1 can be composed of about 15 different subunits; different subcomplexes with different compositions have been identified which probably have different functions.

It is found in the cellular thylakoid membrane. It catalyses the reaction a plastoquinone + NADH + (n+1) H(+)(in) = a plastoquinol + NAD(+) + n H(+)(out). The catalysed reaction is a plastoquinone + NADPH + (n+1) H(+)(in) = a plastoquinol + NADP(+) + n H(+)(out). NDH-1 shuttles electrons from an unknown electron donor, via FMN and iron-sulfur (Fe-S) centers, to quinones in the respiratory and/or the photosynthetic chain. The immediate electron acceptor for the enzyme in this species is believed to be plastoquinone. Couples the redox reaction to proton translocation, and thus conserves the redox energy in a proton gradient. Cyanobacterial NDH-1 also plays a role in inorganic carbon-concentration. In Prochlorococcus marinus (strain MIT 9515), this protein is NAD(P)H-quinone oxidoreductase subunit L.